We begin with the raw amino-acid sequence, 227 residues long: MADS-box transcription factor 25 (227 aa).

The MADS-box domain occupies 1 to 61 (MGRGKIAIKR…GRLYDFSSSS (61 aa)). In terms of domain architecture, K-box spans 86-176 (AKFWQREVTT…RKKFNIAHQR (91 aa)). The segment at 183–227 (KLNSGESTSSEQVTRSSKDPGESSTPRDSRVCIDLELSQKEVEDE) is disordered. The span at 186–197 (SGESTSSEQVTR) shows a compositional bias: polar residues. Over residues 198 to 227 (SSKDPGESSTPRDSRVCIDLELSQKEVEDE) the composition is skewed to basic and acidic residues.

Expressed in seedling roots.

The protein resides in the nucleus. Probable transcription factor. The polypeptide is MADS-box transcription factor 25 (MADS25) (Oryza sativa subsp. japonica (Rice)).